The sequence spans 533 residues: Berberine bridge enzyme-like 12 (533 aa).

Residues 1–20 (MYLIFLLFFAASYSMSLSSA) form the signal peptide. Cysteines 32 and 95 form a disulfide. N-linked (GlcNAc...) asparagine glycans are attached at residues Asn-35, Asn-70, Asn-133, Asn-296, Asn-412, and Asn-417. Positions 73–249 (SMPKPSIIIV…LAFKVKLVTV (177 aa)) constitute an FAD-binding PCMH-type domain. The 6-(S-cysteinyl)-8alpha-(pros-histidyl)-FAD (His-Cys) cross-link spans 110-174 (HDYDGLSYVS…EVHAFPAGVC (65 aa)).

Belongs to the oxygen-dependent FAD-linked oxidoreductase family. It depends on FAD as a cofactor. Post-translationally, the FAD cofactor is bound via a bicovalent 6-S-cysteinyl, 8alpha-N1-histidyl FAD linkage.

Its subcellular location is the secreted. It is found in the cell wall. This Arabidopsis thaliana (Mouse-ear cress) protein is Berberine bridge enzyme-like 12.